The primary structure comprises 503 residues: MAIQIPSRLLFIDGEWREPVLKKRIPIINPATEEIIGHIPAATAEDVELAVEAARRALSRNKGRDWASAPGAVRAKYLRAIAAKIGERKPEIAKLEAIDCGKPLDEAAWDIDDVSGCFEYYAELAEGLDAQQKAPISLPMEQFKSHVLKEPIGVVGLITPWNYPLLMATWKVAPALAAGCAAILKPSELASVTCLELADVCREVGLPPGVLNILTGLGHEAGAPLVSHPHVDKIAFTGSTMTGSKIMTAAAQLVKPVSLELGGKSPIVVFDDVDIDKAAEWTAFGCFWTNGQICSATSRLILHENIATEFLDRLLKWCKNIKIADPLEEGCRLGPVVSGGQYEKILKSIETAKSEGARVLSGGDRPEHLKKGFFIEPTIITDVTTSMQIWREEVFGPVLCVKTFSSEDEALELANDTHYGLGAAVISKDLERCDRFSKGLQAGIVWINCSQPCFCQAPWGGNKRSGFGRELGKWGLDNYLTVKQVTEYVSDDPWGWYTSPSKL.

3 residues coordinate Na(+): I28, D99, and L189. Residue 238–245 (GSTMTGSK) coordinates NAD(+). The active-site Proton acceptor is the E260. The NAD(+) site is built by C294 and E393. C294 (nucleophile) is an active-site residue.

The protein belongs to the aldehyde dehydrogenase family. Expressed in leaves, flowers and fruits.

It localises to the cytoplasm. The protein localises to the cytosol. It carries out the reaction 4-aminobutanal + NAD(+) + H2O = 4-aminobutanoate + NADH + 2 H(+). It catalyses the reaction 3-aminopropanal + NAD(+) + H2O = beta-alanine + NADH + 2 H(+). The protein operates within amine and polyamine biosynthesis; betaine biosynthesis via choline pathway; betaine from betaine aldehyde: step 1/1. In terms of biological role, dehydrogenase that catalyzes the oxidation of several aminoaldehydes. Metabolizes and detoxifies aldehyde products of polyamine degradation to non-toxic amino acids. Catalyzes the oxidation of 4-aminobutanal and 3-aminopropanal to 4-aminobutanoate and beta-alanine, respectively. This is Aminoaldehyde dehydrogenase 1, peroxisomal from Malus domestica (Apple).